Consider the following 588-residue polypeptide: Arylsulfatase L (588 aa).

Residues 1–31 form the signal peptide; sequence MLHLHHSWLCFRSWLAGMLSVLLGLVPSASS. Residue Asn-32 is glycosylated (N-linked (GlcNAc...) asparagine). The Ca(2+) site is built by Asp-46 and Asp-47. A glycan (N-linked (GlcNAc...) asparagine) is linked at Asn-58. Residue Cys-86 coordinates Ca(2+). The active-site Nucleophile is the Cys-86. The residue at position 86 (Cys-86) is a 3-oxoalanine (Cys). The N-linked (GlcNAc...) asparagine glycan is linked to Asn-125. Residue Lys-145 participates in substrate binding. His-147 is an active-site residue. N-linked (GlcNAc...) asparagine glycosylation occurs at Asn-258. Position 301 (His-301) interacts with substrate. N-linked (GlcNAc...) asparagine glycosylation is present at Asn-344. 2 residues coordinate Ca(2+): Asp-353 and His-354. Lys-378 lines the substrate pocket.

Belongs to the sulfatase family. Ca(2+) is required as a cofactor. The conversion to 3-oxoalanine (also known as C-formylglycine, FGly), of a serine or cysteine residue in prokaryotes and of a cysteine residue in eukaryotes, is critical for catalytic activity.

It is found in the golgi apparatus. The protein localises to the golgi stack. The enzyme catalyses an aryl sulfate + H2O = a phenol + sulfate + H(+). Functionally, exhibits arylsulfatase activity towards the artificial substrate 4-methylumbelliferyl sulfate. May be essential for the correct composition of cartilage and bone matrix during development. Has no activity toward steroid sulfates. This Macaca fascicularis (Crab-eating macaque) protein is Arylsulfatase L (ARSL).